The sequence spans 822 residues: Probable phosphoketolase (822 aa).

Belongs to the XFP family. Thiamine diphosphate is required as a cofactor.

This Nocardia farcinica (strain IFM 10152) protein is Probable phosphoketolase.